Here is a 324-residue protein sequence, read N- to C-terminus: MLNLDFIYENRNMSESEAELCMINIIDAPDTVKAAFLTALYVKGITPDELSGFSRALRKLSSISINIDKLTDIVGTGGDHKNTINVSTAASILLSLRIKIAKHGNFGITGSHGSADFMKFIGYKFEMTEYDIIKNLNEKNYVYILAPVYNKTFAKFSNVRKKLGIKTVFNILGPLTNPLNPENLVIGAYDDETAETYASVMLKQNKRAFIVSSTMDEISPEAESHVYYVNNAIRKFDLDPLSITGKRINESNIIEKDPVKSFNIIIDAFKNKNRDAASFIALNAAPALVLNGISRDITSAYDLCINDIESGAAYERLRRISNED.

5-phospho-alpha-D-ribose 1-diphosphate-binding positions include G75, 78–79 (GD), T83, 85–88 (NVST), 102–110 (KHGNFGITG), and S114. G75 is an anthranilate binding site. Mg(2+) is bound at residue S87. Position 105 (N105) interacts with anthranilate. Position 160 (R160) interacts with anthranilate. The Mg(2+) site is built by D216 and E217.

This sequence belongs to the anthranilate phosphoribosyltransferase family. As to quaternary structure, homodimer. The cofactor is Mg(2+).

The enzyme catalyses N-(5-phospho-beta-D-ribosyl)anthranilate + diphosphate = 5-phospho-alpha-D-ribose 1-diphosphate + anthranilate. The protein operates within amino-acid biosynthesis; L-tryptophan biosynthesis; L-tryptophan from chorismate: step 2/5. Catalyzes the transfer of the phosphoribosyl group of 5-phosphorylribose-1-pyrophosphate (PRPP) to anthranilate to yield N-(5'-phosphoribosyl)-anthranilate (PRA). In Picrophilus torridus (strain ATCC 700027 / DSM 9790 / JCM 10055 / NBRC 100828 / KAW 2/3), this protein is Anthranilate phosphoribosyltransferase.